A 255-amino-acid chain; its full sequence is Adenosylcobinamide-GDP ribazoletransferase (255 aa).

The next 7 membrane-spanning stretches (helical) occupy residues 33-53, 57-77, 107-127, 136-156, 174-194, 196-216, and 234-254; these read IFLPAYGLVTGGILALIIELF, FPGFFWAGVIIAGQIYLSGAL, VGSMAVAFFGAFLILKYGSYA, FTVLISEIILRGTGYLVIYSF, AGLIFTLGQTLIFTLGAAAFF, FSLIKILIILLLAYLFAFVVA, and IMELTGLFVPVAVLLINNIGV.

Belongs to the CobS family. Mg(2+) serves as cofactor.

The protein localises to the cell membrane. The catalysed reaction is alpha-ribazole + adenosylcob(III)inamide-GDP = adenosylcob(III)alamin + GMP + H(+). The enzyme catalyses alpha-ribazole 5'-phosphate + adenosylcob(III)inamide-GDP = adenosylcob(III)alamin 5'-phosphate + GMP + H(+). The protein operates within cofactor biosynthesis; adenosylcobalamin biosynthesis; adenosylcobalamin from cob(II)yrinate a,c-diamide: step 7/7. Its function is as follows. Joins adenosylcobinamide-GDP and alpha-ribazole to generate adenosylcobalamin (Ado-cobalamin). Also synthesizes adenosylcobalamin 5'-phosphate from adenosylcobinamide-GDP and alpha-ribazole 5'-phosphate. The polypeptide is Adenosylcobinamide-GDP ribazoletransferase (Carboxydothermus hydrogenoformans (strain ATCC BAA-161 / DSM 6008 / Z-2901)).